Here is a 424-residue protein sequence, read N- to C-terminus: Glutamate-1-semialdehyde 2,1-aminomutase (424 aa).

Lys265 is subject to N6-(pyridoxal phosphate)lysine.

Belongs to the class-III pyridoxal-phosphate-dependent aminotransferase family. HemL subfamily. In terms of assembly, homodimer. Pyridoxal 5'-phosphate serves as cofactor.

It localises to the cytoplasm. It carries out the reaction (S)-4-amino-5-oxopentanoate = 5-aminolevulinate. It functions in the pathway porphyrin-containing compound metabolism; protoporphyrin-IX biosynthesis; 5-aminolevulinate from L-glutamyl-tRNA(Glu): step 2/2. The protein is Glutamate-1-semialdehyde 2,1-aminomutase of Alkaliphilus oremlandii (strain OhILAs) (Clostridium oremlandii (strain OhILAs)).